The primary structure comprises 84 residues: Sulfur carrier protein TusA (84 aa).

Cys-21 functions as the Cysteine persulfide intermediate in the catalytic mechanism.

The protein belongs to the sulfur carrier protein TusA family.

Its subcellular location is the cytoplasm. Sulfur carrier protein which probably makes part of a sulfur-relay system. This is Sulfur carrier protein TusA from Pseudomonas savastanoi pv. phaseolicola (strain 1448A / Race 6) (Pseudomonas syringae pv. phaseolicola (strain 1448A / Race 6)).